A 239-amino-acid polypeptide reads, in one-letter code: Uridylate kinase (239 aa).

Position 10 to 13 (10 to 13 (KLSG)) interacts with ATP. Residues 18-23 (GEDGYG) are involved in allosteric activation by GTP. G52 contacts UMP. Residues G53 and R57 each coordinate ATP. UMP-binding positions include D72 and 133-140 (TGNPYFTT). ATP is bound by residues T160, Y166, and D169.

This sequence belongs to the UMP kinase family. As to quaternary structure, homohexamer.

The protein resides in the cytoplasm. The catalysed reaction is UMP + ATP = UDP + ADP. Its pathway is pyrimidine metabolism; CTP biosynthesis via de novo pathway; UDP from UMP (UMPK route): step 1/1. Allosterically activated by GTP. Inhibited by UTP. In terms of biological role, catalyzes the reversible phosphorylation of UMP to UDP. In Chlorobium chlorochromatii (strain CaD3), this protein is Uridylate kinase.